The following is a 498-amino-acid chain: ATP synthase subunit beta, chloroplastic (498 aa).

Residue Thr-6 is modified to Phosphothreonine. Position 13 is a phosphoserine (Ser-13). 172–179 contributes to the ATP binding site; it reads GGAGVGKT.

The protein belongs to the ATPase alpha/beta chains family. As to quaternary structure, F-type ATPases have 2 components, CF(1) - the catalytic core - and CF(0) - the membrane proton channel. CF(1) has five subunits: alpha(3), beta(3), gamma(1), delta(1), epsilon(1). CF(0) has four main subunits: a(1), b(1), b'(1) and c(9-12).

Its subcellular location is the plastid. The protein localises to the chloroplast thylakoid membrane. The enzyme catalyses ATP + H2O + 4 H(+)(in) = ADP + phosphate + 5 H(+)(out). Functionally, produces ATP from ADP in the presence of a proton gradient across the membrane. The catalytic sites are hosted primarily by the beta subunits. This chain is ATP synthase subunit beta, chloroplastic, found in Crucihimalaya wallichii (Rock-cress).